The chain runs to 412 residues: MMMMSLNSKQAFSMPHAGSLHVEPKYSALHSASPGSSAPAAPSASSPSSSSNAGSGGGGGGGGGGGGGGRSSSSSSSGSGGGGGGGSEAMRRACLPTPPSNIFGGLDESLLARAEALAAVDIVSQSKSHHHHPPHHSPFKPDATYHTMNTIPCTSAASSSSVPISHPSALAGTHHHHHHHHHHHHQPHQALEGELLEHLSPGLALGAMAGPDGTVVSTPAHAPHMATMNPMHQAALSMAHAHGLPSHMGCMSDVDADPRDLEAFAERFKQRRIKLGVTQADVGSALANLKIPGVGSLSQSTICRFESLTLSHNNMIALKPILQAWLEEAEKSHREKLTKPELFNGAEKKRKRTSIAAPEKRSLEAYFAIQPRPSSEKIAAIAEKLDLKKNVVRVWFCNQRQKQKRMKYSAGI.

Residues 29–96 are disordered; it reads LHSASPGSSA…SEAMRRACLP (68 aa). Residues 31–53 show a composition bias toward low complexity; the sequence is SASPGSSAPAAPSASSPSSSSNA. Composition is skewed to gly residues over residues 54 to 70 and 78 to 87; these read GSGG…GGGR and GSGGGGGGGS. The segment at 94–240 is required for transcriptional activation; sequence CLPTPPSNIF…MHQAALSMAH (147 aa). Residues 113-122 carry the POU-IV box motif; the sequence is RAEALAAVDI. Residues 123-191 form a disordered region; that stretch reads VSQSKSHHHH…HHHHQPHQAL (69 aa). The segment covering 127–138 has biased composition (basic residues); the sequence is KSHHHHPPHHSP. Low complexity predominate over residues 152 to 169; sequence PCTSAASSSSVPISHPSA. A compositionally biased stretch (basic residues) spans 173–187; it reads THHHHHHHHHHHHQP. The Nuclear speckle targeting signal signature appears at 174 to 188; it reads HHHHHHHHHHHHQPH. The interval 241-412 is required for DNA-binding and transcriptional repression; that stretch reads AHGLPSHMGC…QKRMKYSAGI (172 aa). The 78-residue stretch at 253-330 folds into the POU-specific domain; the sequence is DVDADPRDLE…ILQAWLEEAE (78 aa). The segment at residues 348-407 is a DNA-binding region (homeobox); the sequence is KKRKRTSIAAPEKRSLEAYFAIQPRPSSEKIAAIAEKLDLKKNVVRVWFCNQRQKQKRMK.

It belongs to the POU transcription factor family. Class-4 subfamily. Interacts with POU4F1; this interaction inhibits both POU4F1 DNA-binding and transcriptional activities. Interacts (C-terminus) with ESR1 (via DNA-binding domain); this interaction increases the estrogen receptor ESR1 transcriptional activity in a DNA- and ligand 17-beta-estradiol-independent manner. Interacts (via C-terminus) with TP53 (via N-terminus). Interacts with DLX1 (via homeobox DNA-binding domain); this interaction suppresses DLX1-mediated transcriptional activity in postnatal retina enhancing retinal ganglion cell (RGC) differentiation. Interacts with DLX2 (via homeobox DNA-binding domain); this interaction enhances RGC differentiation. Interacts (via C-terminus) with ISL1 (via C-terminus). Interacts with ISL2. Interacts with LHX2. As to expression, expressed in the heart, brain and spinal cord. Expressed in cardiomyocytes (at protein level). Expressed in brain and spinal cord. Expressed in dorsal root ganglion (RGD) neurons.

It localises to the nucleus. Its subcellular location is the nucleus speckle. The protein localises to the cytoplasm. Its function is as follows. Tissue-specific DNA-binding transcription factor involved in the development and differentiation of target cells. Functions either as activator or repressor modulating the rate of target gene transcription through RNA polymerase II enzyme in a promoter-dependent manner. Binds to the consensus octamer motif 5'-AT[A/T]A[T/A]T[A/T]A-3' of promoter of target genes. Plays a fundamental role in the gene regulatory network essential for retinal ganglion cell (RGC) differentiation. Binds to an octamer site to form a ternary complex with ISL1; cooperates positively with ISL1 and ISL2 to potentiate transcriptional activation of RGC target genes being involved in RGC fate commitment in the developing retina and RGC axon formation and pathfinding. Inhibits DLX1 and DLX2 transcriptional activities preventing DLX1- and DLX2-mediated ability to promote amacrine cell fate specification. In cooperation with TP53 potentiates transcriptional activation of BAX promoter activity increasing neuronal cell apoptosis. Negatively regulates BAX promoter activity in the absence of TP53. Acts as a transcriptional coactivator via its interaction with the transcription factor ESR1 by enhancing its effect on estrogen response element (ERE)-containing promoter. Antagonizes the transcriptional stimulatory activity of POU4F1 by preventing its binding to an octamer motif. Involved in TNFSF11-mediated terminal osteoclast differentiation. The chain is POU domain, class 4, transcription factor 2 from Rattus norvegicus (Rat).